Consider the following 455-residue polypeptide: Bifunctional protein GlmU (455 aa).

Residues 1-226 form a pyrophosphorylase region; it reads MIAVAILAAG…YQEILGINDR (226 aa). UDP-N-acetyl-alpha-D-glucosamine contacts are provided by residues 7–10, lysine 21, glutamine 73, and 78–79; these read LAAG and GT. Aspartate 103 serves as a coordination point for Mg(2+). Glycine 140, glutamate 155, asparagine 170, and asparagine 224 together coordinate UDP-N-acetyl-alpha-D-glucosamine. Asparagine 224 is a binding site for Mg(2+). Positions 227 to 247 are linker; the sequence is KQLATAYKILQDRIKDDWLVA. An N-acetyltransferase region spans residues 248-455; the sequence is GVTIMDPDSI…RPISSKQTEK (208 aa). Arginine 329 and lysine 347 together coordinate UDP-N-acetyl-alpha-D-glucosamine. Residue histidine 359 is the Proton acceptor of the active site. The UDP-N-acetyl-alpha-D-glucosamine site is built by tyrosine 362 and asparagine 373. Acetyl-CoA contacts are provided by residues alanine 376, 382 to 383, alanine 419, and arginine 436; that span reads NY.

This sequence in the N-terminal section; belongs to the N-acetylglucosamine-1-phosphate uridyltransferase family. It in the C-terminal section; belongs to the transferase hexapeptide repeat family. Homotrimer. It depends on Mg(2+) as a cofactor.

Its subcellular location is the cytoplasm. The catalysed reaction is alpha-D-glucosamine 1-phosphate + acetyl-CoA = N-acetyl-alpha-D-glucosamine 1-phosphate + CoA + H(+). The enzyme catalyses N-acetyl-alpha-D-glucosamine 1-phosphate + UTP + H(+) = UDP-N-acetyl-alpha-D-glucosamine + diphosphate. It functions in the pathway nucleotide-sugar biosynthesis; UDP-N-acetyl-alpha-D-glucosamine biosynthesis; N-acetyl-alpha-D-glucosamine 1-phosphate from alpha-D-glucosamine 6-phosphate (route II): step 2/2. Its pathway is nucleotide-sugar biosynthesis; UDP-N-acetyl-alpha-D-glucosamine biosynthesis; UDP-N-acetyl-alpha-D-glucosamine from N-acetyl-alpha-D-glucosamine 1-phosphate: step 1/1. It participates in bacterial outer membrane biogenesis; LPS lipid A biosynthesis. Functionally, catalyzes the last two sequential reactions in the de novo biosynthetic pathway for UDP-N-acetylglucosamine (UDP-GlcNAc). The C-terminal domain catalyzes the transfer of acetyl group from acetyl coenzyme A to glucosamine-1-phosphate (GlcN-1-P) to produce N-acetylglucosamine-1-phosphate (GlcNAc-1-P), which is converted into UDP-GlcNAc by the transfer of uridine 5-monophosphate (from uridine 5-triphosphate), a reaction catalyzed by the N-terminal domain. The chain is Bifunctional protein GlmU from Acaryochloris marina (strain MBIC 11017).